Here is a 183-residue protein sequence, read N- to C-terminus: Adenine phosphoribosyltransferase (183 aa).

This sequence belongs to the purine/pyrimidine phosphoribosyltransferase family. In terms of assembly, homodimer.

The protein localises to the cytoplasm. The enzyme catalyses AMP + diphosphate = 5-phospho-alpha-D-ribose 1-diphosphate + adenine. Its pathway is purine metabolism; AMP biosynthesis via salvage pathway; AMP from adenine: step 1/1. In terms of biological role, catalyzes a salvage reaction resulting in the formation of AMP, that is energically less costly than de novo synthesis. The polypeptide is Adenine phosphoribosyltransferase (Escherichia coli (strain K12 / MC4100 / BW2952)).